Here is a 391-residue protein sequence, read N- to C-terminus: Formate-dependent phosphoribosylglycinamide formyltransferase (391 aa).

N(1)-(5-phospho-beta-D-ribosyl)glycinamide-binding positions include 20 to 21 (EL) and Glu80. Residues Arg112, Lys153, 158–163 (SSGKGQ), 193–196 (EGFI), and Glu201 each bind ATP. The ATP-grasp domain occupies 117–306 (RLAAEDLQIP…EFALHVRAFL (190 aa)). Mg(2+)-binding residues include Glu265 and Glu277. Residues Asp284, Lys354, and 361-362 (RR) contribute to the N(1)-(5-phospho-beta-D-ribosyl)glycinamide site.

Belongs to the PurK/PurT family. In terms of assembly, homodimer.

It catalyses the reaction N(1)-(5-phospho-beta-D-ribosyl)glycinamide + formate + ATP = N(2)-formyl-N(1)-(5-phospho-beta-D-ribosyl)glycinamide + ADP + phosphate + H(+). The protein operates within purine metabolism; IMP biosynthesis via de novo pathway; N(2)-formyl-N(1)-(5-phospho-D-ribosyl)glycinamide from N(1)-(5-phospho-D-ribosyl)glycinamide (formate route): step 1/1. In terms of biological role, involved in the de novo purine biosynthesis. Catalyzes the transfer of formate to 5-phospho-ribosyl-glycinamide (GAR), producing 5-phospho-ribosyl-N-formylglycinamide (FGAR). Formate is provided by PurU via hydrolysis of 10-formyl-tetrahydrofolate. The polypeptide is Formate-dependent phosphoribosylglycinamide formyltransferase (Photobacterium profundum (strain SS9)).